We begin with the raw amino-acid sequence, 233 residues long: Gamma-glutamyl-hercynylcysteine sulfoxide hydrolase (233 aa).

Cys-2 acts as the Nucleophile in catalysis. The region spanning Cys-2–Arg-233 is the Glutamine amidotransferase type-2 domain.

The catalysed reaction is gamma-L-glutamyl-hercynylcysteine S-oxide + H2O = S-(hercyn-2-yl)-L-cysteine S-oxide + L-glutamate. It functions in the pathway amino-acid biosynthesis; ergothioneine biosynthesis. Its function is as follows. Catalyzes the hydrolysis of the gamma-glutamyl amide bond of hercynyl-gamma-L-glutamyl-L-cysteine sulfoxide to produce hercynylcysteine sulfoxide, a step in the biosynthesis pathway of ergothioneine. Ergothioneine is an antioxidant that protects mycobacteria from oxidative stress. The sequence is that of Gamma-glutamyl-hercynylcysteine sulfoxide hydrolase (egtC) from Mycobacterium tuberculosis (strain ATCC 25618 / H37Rv).